A 622-amino-acid chain; its full sequence is WD repeat-containing protein 46 (622 aa).

The segment at 1 to 135 is disordered; sequence METAPKPGRG…KTQSKLEKAE (135 aa). Ser-41 is modified (phosphoserine). The segment covering 106–118 has biased composition (basic and acidic residues); it reads EEARKFCRIDKSK. 5 WD repeats span residues 192 to 233, 234 to 271, 314 to 353, 356 to 395, and 398 to 435; these read LRQF…CEIN, VMEAVRDIHFLHSEALLAVAQNRWLYIYDNQGIELHCI, VRAGRLSVMAQNPYNAVIHLGHSNGTVSLWSPAVKEPLAK, CHRGGVRAVAVDSTGTYMATSGLDHQLKIFDLRGTFQPLS, and TLPQGAGHLAFSQRGLLVAGMGDVVNIWAGQGKASPPS. The interval 547–622 is disordered; the sequence is AAFQPKAKQK…AREGGLQVDP (76 aa). The span at 571-582 shows a compositional bias: basic and acidic residues; that stretch reads VMDQEHRDKVRQ.

As to quaternary structure, part of the small subunit (SSU) processome, composed of more than 70 proteins and the RNA chaperone small nucleolar RNA (snoRNA) U3. Interacts with DDX21, NCL, NOP2 and EBNA1BP2.

It is found in the nucleus. It localises to the nucleolus. In terms of biological role, scaffold component of the nucleolar structure. Required for localization of DDX21 and NCL to the granular compartment of the nucleolus. Part of the small subunit (SSU) processome, first precursor of the small eukaryotic ribosomal subunit. During the assembly of the SSU processome in the nucleolus, many ribosome biogenesis factors, an RNA chaperone and ribosomal proteins associate with the nascent pre-rRNA and work in concert to generate RNA folding, modifications, rearrangements and cleavage as well as targeted degradation of pre-ribosomal RNA by the RNA exosome. The polypeptide is WD repeat-containing protein 46 (Wdr46) (Mus musculus (Mouse)).